Here is a 321-residue protein sequence, read N- to C-terminus: PI-PLC X domain-containing protein 3 (321 aa).

In terms of domain architecture, PI-PLC X-box spans serine 22 to serine 197. Active-site residues include histidine 37 and histidine 114.

As to expression, expressed at highest levels in heart. Also detected in kidney, lung, small intestine and colon. Expressed at very low levels, if any, in leukocytes, thymus and skeletal muscle.

The protein resides in the cytoplasm. The sequence is that of PI-PLC X domain-containing protein 3 (PLCXD3) from Homo sapiens (Human).